Consider the following 89-residue polypeptide: Small ribosomal subunit protein uS15 (89 aa).

Belongs to the universal ribosomal protein uS15 family. As to quaternary structure, part of the 30S ribosomal subunit. Forms a bridge to the 50S subunit in the 70S ribosome, contacting the 23S rRNA.

One of the primary rRNA binding proteins, it binds directly to 16S rRNA where it helps nucleate assembly of the platform of the 30S subunit by binding and bridging several RNA helices of the 16S rRNA. In terms of biological role, forms an intersubunit bridge (bridge B4) with the 23S rRNA of the 50S subunit in the ribosome. The polypeptide is Small ribosomal subunit protein uS15 (Sinorhizobium medicae (strain WSM419) (Ensifer medicae)).